We begin with the raw amino-acid sequence, 670 residues long: CLK4-associating serine/arginine rich protein (670 aa).

Residue Ser-101 is modified to Phosphoserine. 2 disordered regions span residues 171-232 (TVAE…GMAD) and 258-670 (EKAM…HYRH). Acidic residues predominate over residues 182-214 (PEEEESPAEEESNSDEDEVIPDIDVEVDVDELN). Residues 265 to 283 (RRSRRQRREFREKRLRGRK) are compositionally biased toward basic residues. A phosphoserine mark is found at Ser-285 and Ser-294. A compositionally biased stretch (basic and acidic residues) spans 290–313 (ARRDSPTYDPYKRSPSESSSESRS). Thr-327 is subject to Phosphothreonine. Residues Ser-331 and Ser-335 each carry the phosphoserine modification. Low complexity predominate over residues 340-355 (AAAAAAAAASGAATGK). Positions 356-365 (PPAPPQPGGP) are enriched in pro residues. Low complexity predominate over residues 378 to 400 (STSSSSSSASRTSSSRSRSSSSS). 2 stretches are compositionally biased toward basic residues: residues 411–443 (SGRH…RRHS) and 481–491 (RGGRGPRHHSS). Residues 492-529 (SRSSWSLSPSRSRSLTRSRSPSLSRSRSLSRSRSQSHS) are compositionally biased toward low complexity. The residue at position 543 (Ser-543) is a Phosphoserine. The residue at position 569 (Thr-569) is a Phosphothreonine. The stretch at 581-643 (ALNRQFKADK…ERQYSRQSRS (63 aa)) forms a coiled coil. Composition is skewed to basic and acidic residues over residues 586 to 613 (FKAD…ELRA) and 621 to 637 (KERE…ERQY). The segment covering 638 to 647 (SRQSRSPSPR) has biased composition (low complexity). The span at 655–670 (SRRRSRSRSRSPHYRH) shows a compositional bias: basic residues.

Belongs to the splicing factor SR family. As to quaternary structure, probably interacts with CLK4. Post-translationally, phosphorylated in vitro by CLK4.

It localises to the nucleus. In terms of biological role, probably functions as an alternative splicing regulator. May regulate the mRNA splicing of genes such as CLK1. May act by regulating members of the CLK kinase family. In Bos taurus (Bovine), this protein is CLK4-associating serine/arginine rich protein (CLASRP).